Reading from the N-terminus, the 75-residue chain is MNKSKRSFRRRLPPIGSRDQIDHKNMSSISQFISERGKILSGRVSRLTPKQQRLMTIAIKRARIPSSSPFLNNDN.

Residues 1–12 (MNKSKRSFRRRL) are compositionally biased toward basic residues. Residues 1–21 (MNKSKRSFRRRLPPIGSRDQI) are disordered.

Belongs to the bacterial ribosomal protein bS18 family. Part of the 30S ribosomal subunit.

Its subcellular location is the plastid. The protein localises to the chloroplast. The polypeptide is Small ribosomal subunit protein bS18c (Cycas taitungensis (Prince sago)).